We begin with the raw amino-acid sequence, 449 residues long: Doublesex- and mab-3-related transcription factor A2 (449 aa).

The segment at residues 57–104 (CARCRNHGVVSALKGHKRYCRWKDCMCAKCTLIAERQRVMAAQVALRR) is a DNA-binding region (DM). The disordered stretch occupies residues 163 to 259 (FPKTQLSGST…PSPSSAASRH (97 aa)). Polar residues predominate over residues 166-187 (TQLSGSTTTQKSVGKPASTESD). Residues 230-240 (GSVSSLGSDSG) show a composition bias toward low complexity. A DMA domain is found at 260–295 (MNAIDILTRVFPSHKRSVLELVLQGCGKDVVQAIEQ).

Belongs to the DMRT family. As to expression, expressed in brain and eye.

It is found in the nucleus. In terms of biological role, may be involved in sexual development. This Xiphophorus maculatus (Southern platyfish) protein is Doublesex- and mab-3-related transcription factor A2 (dmrta2).